The following is a 777-amino-acid chain: DISP complex protein LRCH3 (777 aa).

LRR repeat units follow at residues 56–79 (AAVT…AANH), 81–104 (LTDT…ACHF), 105–127 (VSLE…ILNL), 128–150 (QALT…LCNL), 152–172 (LKVL…IGHL), 173–195 (RHLM…IGNL), 196–218 (EALR…LAEL), 220–239 (LIRL…CYRN), 240–264 (LRHL…CIKG), and 266–290 (VHIF…DRRP). The tract at residues 56–290 (AAVTGVLSLS…PDLPDYDRRP (235 aa)) is mediates interaction with DOCK7. Phosphoserine occurs at positions 324, 415, and 419. The tract at residues 382 to 648 (TAEEEEAEVR…DSTDSITGQN (267 aa)) is mediates direct interaction with MYO6. The tract at residues 568–590 (FTPLKSDDRPNALLSSPATETVH) is disordered. Phosphoserine occurs at positions 611 and 628. The segment at 621–653 (ETNKGHASPLPPSAAPTTDSTDSITGQNSRQRE) is disordered. Low complexity predominate over residues 635–645 (APTTDSTDSIT). In terms of domain architecture, Calponin-homology (CH) spans 652–765 (REEELELIDQ…VTVQALLELA (114 aa)).

In terms of assembly, component of the DOCK7-induced septin displacement/DISP complex, at least composed of DOCK7, LRCH3 and MYO6.

It is found in the cytoplasm. Its function is as follows. As part of the DISP complex, may regulate the association of septins with actin and thereby regulate the actin cytoskeleton. In Homo sapiens (Human), this protein is DISP complex protein LRCH3.